The primary structure comprises 148 residues: HTH-type transcriptional regulator Ptr1 (148 aa).

An HTH asnC-type domain is found at 2–63; that stretch reads LDRIDLKILR…SINPKNLGFE (62 aa). Positions 21–40 form a DNA-binding region, H-T-H motif; that stretch reads FREIGRELGISEGTVRNRVK.

Homodimer.

Functionally, participates in positive as well as negative regulation of transcription. Binds to its own promoter. The polypeptide is HTH-type transcriptional regulator Ptr1 (ptr1) (Methanocaldococcus jannaschii (strain ATCC 43067 / DSM 2661 / JAL-1 / JCM 10045 / NBRC 100440) (Methanococcus jannaschii)).